Consider the following 312-residue polypeptide: Very-long-chain 3-oxoacyl-CoA reductase (312 aa).

Residues 4–24 (ALPAAGFLYWVGASTIAYLTL) form a helical membrane-spanning segment. 50 to 79 (GEWAVVTGGTDGIGKSYAEELAKRGMKIVL) contacts NADP(+). 2 consecutive transmembrane segments (helical) span residues 182-202 (GVILNISSASGMLPVPLLTVY) and 271-291 (GYVIHAIMGSINSILPRWIYF). Ser189 is a binding site for substrate. Tyr202 serves as the catalytic Proton acceptor. The short motif at 308–312 (KTKKN) is the Di-lysine motif element.

The protein belongs to the short-chain dehydrogenases/reductases (SDR) family. 17-beta-HSD 3 subfamily.

It localises to the endoplasmic reticulum membrane. The enzyme catalyses a very-long-chain (3R)-3-hydroxyacyl-CoA + NADP(+) = a very-long-chain 3-oxoacyl-CoA + NADPH + H(+). It catalyses the reaction 17beta-estradiol + NAD(+) = estrone + NADH + H(+). It carries out the reaction 17beta-estradiol + NADP(+) = estrone + NADPH + H(+). The catalysed reaction is 3-oxooctadecanoyl-CoA + NADPH + H(+) = (3R)-hydroxyoctadecanoyl-CoA + NADP(+). The enzyme catalyses (7Z,10Z,13Z,16Z)-3-oxodocosatetraenoyl-CoA + NADPH + H(+) = (3R)-hydroxy-(7Z,10Z,13Z,16Z)-docosatetraenoyl-CoA + NADP(+). It catalyses the reaction 3-oxo-(7Z,10Z,13Z,16Z,19Z)-docosapentaenoyl-CoA + NADPH + H(+) = (3R)-hydroxy-(7Z,10Z,13Z,16Z,19Z)-docosapentaenoyl-CoA + NADP(+). It carries out the reaction (8Z,11Z,14Z)-3-oxoeicosatrienoyl-CoA + NADPH + H(+) = (3R)-hydroxy-(8Z,11Z,14Z)-eicosatrienoyl-CoA + NADP(+). Its pathway is lipid metabolism; fatty acid biosynthesis. The protein operates within steroid biosynthesis; estrogen biosynthesis. Catalyzes the second of the four reactions of the long-chain fatty acids elongation cycle. This endoplasmic reticulum-bound enzymatic process, allows the addition of two carbons to the chain of long- and very long-chain fatty acids/VLCFAs per cycle. This enzyme has a 3-ketoacyl-CoA reductase activity, reducing 3-ketoacyl-CoA to 3-hydroxyacyl-CoA, within each cycle of fatty acid elongation. Thereby, it may participate in the production of VLCFAs of different chain lengths that are involved in multiple biological processes as precursors of membrane lipids and lipid mediators. May also catalyze the transformation of estrone (E1) into estradiol (E2) and play a role in estrogen formation. In Rattus norvegicus (Rat), this protein is Very-long-chain 3-oxoacyl-CoA reductase.